Reading from the N-terminus, the 386-residue chain is MTGLDMETIFAKIKDEYARTDDVGKRQIQGHIRELQVGFYSDWDVVMRLSSGPLQVALAKVAIDLGIFRSLKESDTPITLAEFVKKTGASPRLLGRILRTQAAFGLIKETGPQEYTSSAFTDVFANSDAAGAVVQLFDISGPCTQILPDFLAERNYQDITSNKDCVFQKAFGSDLTMFEWMPQHPKHMESLGHLMALERPVSWVDHFPILEELGKFPAPDKVLMVDIGGGFGQQSKALRAKFPNLPGRLIVQDIPQTLANAQPAAGIEFMEHNFFEPQPIQNAKFYYLRHVFHDWPDEQCVLILKQIIPAMGPESQILIDEMVIPSTGVPWQAAFTDLLMMNSLGGVERTRAEWDDLMEQAGLEIIQSKVYDSKEQAILVAVAKRT.

137-150 serves as a coordination point for substrate; the sequence is FDISGPCTQILPDF. Residues 177–197 are substrate binding; that stretch reads MFEWMPQHPKHMESLGHLMAL. Residues 228-229, Asp-253, 273-274, and Arg-289 contribute to the S-adenosyl-L-methionine site; these read GG and NF. The active-site Proton acceptor is the His-293.

The protein belongs to the class I-like SAM-binding methyltransferase superfamily. Cation-independent O-methyltransferase family. COMT subfamily.

It carries out the reaction 6-demethylsterigmatocystin + S-adenosyl-L-methionine = sterigmatocystin + S-adenosyl-L-homocysteine + H(+). It functions in the pathway mycotoxin biosynthesis; aflatoxin biosynthesis. In terms of biological role, catalyzes both the conversion of demethylsterigmatocystin (DMST) to sterigmatocystin and the conversion of dihydrodemethylsterigmatocystin to dihydrosterigmatocystin (DHDMST) during aflatoxin biosynthesis. This is Demethylsterigmatocystin 6-O-methyltransferase (omtB) from Aspergillus flavus (strain ATCC 200026 / FGSC A1120 / IAM 13836 / NRRL 3357 / JCM 12722 / SRRC 167).